Here is a 221-residue protein sequence, read N- to C-terminus: Small ribosomal subunit protein uS5 (221 aa).

Positions 46–109 constitute an S5 DRBM domain; the sequence is LKDEVINIER…DNAKLNIIEI (64 aa).

The protein belongs to the universal ribosomal protein uS5 family. As to quaternary structure, part of the 30S ribosomal subunit. Contacts protein S4.

In terms of biological role, with S4 and S12 plays an important role in translational accuracy. In Picrophilus torridus (strain ATCC 700027 / DSM 9790 / JCM 10055 / NBRC 100828 / KAW 2/3), this protein is Small ribosomal subunit protein uS5.